A 169-amino-acid polypeptide reads, in one-letter code: Ureidoglycolate lyase (169 aa).

The protein belongs to the ureidoglycolate lyase family. In terms of assembly, homodimer. Requires Ni(2+) as cofactor.

The enzyme catalyses (S)-ureidoglycolate = urea + glyoxylate. It functions in the pathway nitrogen metabolism; (S)-allantoin degradation. Its function is as follows. Catalyzes the catabolism of the allantoin degradation intermediate (S)-ureidoglycolate, generating urea and glyoxylate. Involved in the utilization of allantoin as nitrogen source. The protein is Ureidoglycolate lyase of Brucella anthropi (strain ATCC 49188 / DSM 6882 / CCUG 24695 / JCM 21032 / LMG 3331 / NBRC 15819 / NCTC 12168 / Alc 37) (Ochrobactrum anthropi).